The following is a 197-amino-acid chain: Recombination protein RecR (197 aa).

The C4-type zinc finger occupies 55-70; sequence CVQCRDFTESEICTIC. Residues 78-173 form the Toprim domain; that stretch reads QQLCVVESPA…RPSRLAQGMP (96 aa).

It belongs to the RecR family.

May play a role in DNA repair. It seems to be involved in an RecBC-independent recombinational process of DNA repair. It may act with RecF and RecO. This is Recombination protein RecR from Xanthomonas oryzae pv. oryzae (strain MAFF 311018).